An 854-amino-acid polypeptide reads, in one-letter code: V-type proton ATPase 116 kDa subunit a 2 (854 aa).

The Cytoplasmic portion of the chain corresponds to 1–393 (MGSLFRSETM…DAYGVGSYQE (393 aa)). The helical transmembrane segment at 394–412 (VNPALFTIITFPFLFAVMF) threads the bilayer. Topologically, residues 413–414 (GD) are vacuolar. A helical transmembrane segment spans residues 415–431 (FGHGFVMFLFALLLVLN). Residues 432 to 445 (ENHPRLNQSQEIMR) lie on the Cytoplasmic side of the membrane. The chain crosses the membrane as a helical span at residues 446-475 (MFFNGRYILLLMGLFSVYTGLIYNDCFSKS). At 476-549 (VNLFGSRWNV…ATNRLTFLNS (74 aa)) the chain is on the vacuolar side. A helical membrane pass occupies residues 550–569 (FKMKMSVILGITHMTFGVIL). The Cytoplasmic portion of the chain corresponds to 570–587 (GIFNHLHFRKKFNICLVS). Residues 588 to 608 (IPELLFMLCIFGYLIFMIIYK) traverse the membrane as a helical segment. Topologically, residues 609 to 651 (WLVYSAETSRTAPSILIEFISMFLFLASDTGGLYPGQEHVQRL) are vacuolar. Residues 652–671 (LLLITVLSVPVLFLGKPLFL) form a helical membrane-spanning segment. Residues 672–739 (LWLHRGRSCF…EILMTQIIHS (68 aa)) are Cytoplasmic-facing. 2 positions are modified to phosphoserine: S695 and S700. The helical transmembrane segment at 740–764 (IEYCLGCISNTASYLRLWALSLAHA) threads the bilayer. The Vacuolar portion of the chain corresponds to 765–785 (QLSEVLWAMLMHVGLRVDTAY). Residues 786–824 (GVLVLLPVIAFFAVLTIFILLIMEGLSAFLHAIRLHWVE) traverse the membrane as a helical segment. The Cytoplasmic segment spans residues 825–854 (FQNKFYVGAGTKFVPFSFRLLSSKFSDDLA).

This sequence belongs to the V-ATPase 116 kDa subunit family. V-ATPase is a heteromultimeric enzyme made up of two complexes: the ATP-hydrolytic V1 complex and the proton translocation V0 complex. The V1 complex consists of three catalytic AB heterodimers that form a heterohexamer, three peripheral stalks each consisting of EG heterodimers, one central rotor including subunits D and F, and the regulatory subunits C and H. The proton translocation complex V0 consists of the proton transport subunit a, a ring of proteolipid subunits c9c'', rotary subunit d, subunits e and f, and the accessory subunits ATP6AP1/Ac45 and ATP6AP2/PRR. Directly interacts with PSCD2 through its N-terminal cytosolic tail in an intra-endosomal acidification-dependent manner. Disruption of this interaction results in the inhibition of endocytosis. Interacts with SPAAR. Highly expressed in lung, kidney and spleen.

It localises to the cell membrane. The protein localises to the endosome membrane. Its function is as follows. Subunit of the V0 complex of vacuolar(H+)-ATPase (V-ATPase), a multisubunit enzyme composed of a peripheral complex (V1) that hydrolyzes ATP and a membrane integral complex (V0) that translocates protons. V-ATPase is responsible for acidifying and maintaining the pH of intracellular compartments and in some cell types, is targeted to the plasma membrane, where it is responsible for acidifying the extracellular environment. Essential component of the endosomal pH-sensing machinery. May play a role in maintaining the Golgi functions, such as glycosylation maturation, by controlling the Golgi pH. In aerobic conditions, involved in intracellular iron homeostasis, thus triggering the activity of Fe(2+) prolyl hydroxylase (PHD) enzymes, and leading to HIF1A hydroxylation and subsequent proteasomal degradation. This is V-type proton ATPase 116 kDa subunit a 2 (ATP6V0A2) from Bos taurus (Bovine).